Reading from the N-terminus, the 764-residue chain is 5-methyltetrahydropteroyltriglutamate--homocysteine methyltransferase (764 aa).

5-methyltetrahydropteroyltri-L-glutamate contacts are provided by residues 16–19 (RELK) and Lys115. L-homocysteine-binding positions include 435–437 (IGS) and Glu488. Residues 435-437 (IGS) and Glu488 each bind L-methionine. 5-methyltetrahydropteroyltri-L-glutamate is bound by residues 519 to 520 (RC) and Trp565. Asp603 contacts L-homocysteine. Position 603 (Asp603) interacts with L-methionine. Glu609 lines the 5-methyltetrahydropteroyltri-L-glutamate pocket. 3 residues coordinate Zn(2+): His645, Cys647, and Glu669. Residue His698 is the Proton donor of the active site. Position 730 (Cys730) interacts with Zn(2+).

It belongs to the vitamin-B12 independent methionine synthase family. It depends on Zn(2+) as a cofactor.

The catalysed reaction is 5-methyltetrahydropteroyltri-L-glutamate + L-homocysteine = tetrahydropteroyltri-L-glutamate + L-methionine. It functions in the pathway amino-acid biosynthesis; L-methionine biosynthesis via de novo pathway; L-methionine from L-homocysteine (MetE route): step 1/1. Catalyzes the transfer of a methyl group from 5-methyltetrahydrofolate to homocysteine resulting in methionine formation. The protein is 5-methyltetrahydropteroyltriglutamate--homocysteine methyltransferase of Burkholderia mallei (strain NCTC 10247).